The primary structure comprises 136 residues: Galectin-7 (136 aa).

Residues 6-136 form the Galectin domain; sequence HKTSLPQGVR…DVQLHSLNIF (131 aa). Residue 70–76 coordinates a beta-D-galactoside; it reads WGREERG.

Monomer.

It is found in the cytoplasm. The protein resides in the nucleus. It localises to the secreted. Functionally, could be involved in cell-cell and/or cell-matrix interactions necessary for normal growth control. Pro-apoptotic protein that functions intracellularly upstream of JNK activation and cytochrome c release. The sequence is that of Galectin-7 (Lgals7) from Mus musculus (Mouse).